Consider the following 193-residue polypeptide: Anthranilate synthase component 2 (193 aa).

The region spanning 3–193 is the Glutamine amidotransferase type-1 domain; the sequence is NILFLDNFDS…QQSIEWLLNR (191 aa). 57–59 contributes to the L-glutamine binding site; it reads GPG. C84 (nucleophile; for GATase activity) is an active-site residue. L-glutamine is bound by residues Q88 and 134–135; that span reads SL. Residues H170 and E172 each act as for GATase activity in the active site.

In terms of assembly, heterotetramer consisting of two non-identical subunits: a beta subunit (TrpG) and a large alpha subunit (TrpE).

It carries out the reaction chorismate + L-glutamine = anthranilate + pyruvate + L-glutamate + H(+). The protein operates within amino-acid biosynthesis; L-tryptophan biosynthesis; L-tryptophan from chorismate: step 1/5. Its function is as follows. Part of a heterotetrameric complex that catalyzes the two-step biosynthesis of anthranilate, an intermediate in the biosynthesis of L-tryptophan. In the first step, the glutamine-binding beta subunit (TrpG) of anthranilate synthase (AS) provides the glutamine amidotransferase activity which generates ammonia as a substrate that, along with chorismate, is used in the second step, catalyzed by the large alpha subunit of AS (TrpE) to produce anthranilate. In the absence of TrpG, TrpE can synthesize anthranilate directly from chorismate and high concentrations of ammonia. This is Anthranilate synthase component 2 (trpG) from Haemophilus influenzae (strain ATCC 51907 / DSM 11121 / KW20 / Rd).